The following is a 543-amino-acid chain: MLIRFITDSAKPIVIIGDFLVIIMMIGRALILDGYTDEPAGLGVPPYIGIYPRYAYGALDKYNVKVDYITIDKFREIRGDFNLNKYDAIICICGFHTPGKYLNANPATLKEFVSILYKYDGLKILGGPAATKYGSSMIGGKIEDESKYKAFFDVVAEGDLEAVLNDLLREGSIEKIDFNRYRTYEELREYAIRGAKVVKKHPNYPYIIAEIETYRGCPRALTGGCSFCTEPRRFGLPKFRDEKDIIDEIKVLYNEGIKYFRIGRQPCMFSYKSIDSEKEEVPKPNVEAIEKLFKGIRNVSNPKVLHIDNANPAVIARHEDESREVAKILVKYCTSGNVAAFGVESFDEKVIKANNLLTTPEDVLKAVEILNEVGGKRGETGLPYLLPGINLLFGLKGERKETFTINFEYLKEIYDRGFMIRRINIRQVVPFFGTDITLKDIKKAEKRKKLFLWFKEKVREEIDNKMLKRVVPKGTILRDVFVEVKEREDLYFGRQFGSYPLLVGILDKNLKIGEFVDVEVVDYGRRSITGKVVRDIRKIHIVG.

Positions 203–460 (NYPYIIAEIE…FLWFKEKVRE (258 aa)) constitute a Radical SAM core domain. In terms of domain architecture, TRAM spans 470–534 (VVPKGTILRD…RRSITGKVVR (65 aa)).

This is an uncharacterized protein from Methanocaldococcus jannaschii (strain ATCC 43067 / DSM 2661 / JAL-1 / JCM 10045 / NBRC 100440) (Methanococcus jannaschii).